We begin with the raw amino-acid sequence, 96 residues long: U-scoloptoxin(06)-Sm1a (96 aa).

The signal sequence occupies residues 1 to 23 (MNSFSFFLVIFVVLNLQVAKLMA).

The protein belongs to the scoloptoxin-06 family. Contains 2 disulfide bonds. In terms of tissue distribution, expressed by the venom gland.

Its subcellular location is the secreted. This is U-scoloptoxin(06)-Sm1a from Scolopendra morsitans (Tanzanian blue ringleg centipede).